A 298-amino-acid chain; its full sequence is Heterogeneous nuclear ribonucleoprotein C (298 aa).

Ala-2 carries the N-acetylalanine modification. Residues Lys-8, Lys-50, Lys-89, and Lys-94 each participate in a glycyl lysine isopeptide (Lys-Gly) (interchain with G-Cter in SUMO2) cross-link. One can recognise an RRM domain in the interval 16–87; it reads SRVFIGNLNT…QVLDINLAAE (72 aa). Residue Ser-108 is modified to Phosphoserine. 2 disordered regions span residues 131 to 177 and 204 to 298; these read PPPP…VKGD and EKEQ…EDDS. The short motif at 142-148 is the Nuclear localization signal element; sequence PSKRQRV. A phosphoserine mark is found at Ser-149 and Ser-153. Residues 162–173 are compositionally biased toward low complexity; sequence SKSGQRGSSSKS. At Lys-163 the chain carries N6-acetyllysine; alternate. Residue Lys-163 forms a Glycyl lysine isopeptide (Lys-Gly) (interchain with G-Cter in SUMO2); alternate linkage. Residues 176-211 are a coiled coil; it reads GDDLQAIKKELTQIKQKVDSLLESLEKIEKEQSKQA. Residue Lys-209 forms a Glycyl lysine isopeptide (Lys-Gly) (interchain with G-Cter in SUMO2) linkage. 3 positions are modified to phosphoserine: Ser-214, Ser-216, and Ser-217. Lys-222 is covalently cross-linked (Glycyl lysine isopeptide (Lys-Gly) (interchain with G-Cter in SUMO2)). Lys-225 is covalently cross-linked (Glycyl lysine isopeptide (Lys-Gly) (interchain with G-Cter in SUMO2); alternate). Lys-225 is covalently cross-linked (Glycyl lysine isopeptide (Lys-Gly) (interchain with G-Cter in SUMO1); alternate). Residues Ser-226, Ser-231, Ser-232, and Ser-234 each carry the phosphoserine modification. The segment covering 235-246 has biased composition (basic and acidic residues); that stretch reads VKKDETNVKMES. Glycyl lysine isopeptide (Lys-Gly) (interchain with G-Cter in SUMO2) cross-links involve residues Lys-236 and Lys-237. Lys-243 participates in a covalent cross-link: Glycyl lysine isopeptide (Lys-Gly) (interchain with G-Cter in SUMO2); alternate. Lys-243 participates in a covalent cross-link: Glycyl lysine isopeptide (Lys-Gly) (interchain with G-Cter in SUMO); alternate. Residues Ser-246 and Ser-253 each carry the phosphoserine modification. The segment covering 248 to 269 has biased composition (acidic residues); the sequence is AGADDSAEEGDLLDDDDNEDRG. The span at 270 to 279 shows a compositional bias: basic and acidic residues; sequence DDQLELKDDE. Acidic residues predominate over residues 280–298; it reads KEPEEGEDDRDSANGEDDS. Phosphoserine occurs at positions 291 and 298.

It belongs to the RRM HNRPC family. RALY subfamily. In terms of assembly, tetramer composed of 3 copies of isoform C1 and 1 copy of isoform C2. Assembly of 3 tetramers with bound pre-mRNA gives rise to a 19S complex that interacts with HNRNPA2B1 tetramers. Component of the 40S hnRNP particle. Identified in the spliceosome C complex. Interacts with IGF2BP1. Interacts with PPIA/CYPA. In terms of processing, phosphorylated on Ser-253 and Ser-291 in resting cells. Sumoylated. Sumoylation reduces affinity for mRNA. Post-translationally, ubiquitinated and degraded after nucleo-cytoplasmic transport by YWHAE.

The protein localises to the nucleus. In terms of biological role, binds pre-mRNA and nucleates the assembly of 40S hnRNP particles. Interacts with poly-U tracts in the 3'-UTR or 5'-UTR of mRNA and modulates the stability and the level of translation of bound mRNA molecules. Single HNRNPC tetramers bind 230-240 nucleotides. Trimers of HNRNPC tetramers bind 700 nucleotides. May play a role in the early steps of spliceosome assembly and pre-mRNA splicing. N6-methyladenosine (m6A) has been shown to alter the local structure in mRNAs and long non-coding RNAs (lncRNAs) via a mechanism named 'm(6)A-switch', facilitating binding of HNRNPC, leading to regulation of mRNA splicing. In Rattus norvegicus (Rat), this protein is Heterogeneous nuclear ribonucleoprotein C.